The chain runs to 126 residues: NADPH-dependent 7-cyano-7-deazaguanine reductase (126 aa).

The active-site Thioimide intermediate is cysteine 40. Aspartate 47 acts as the Proton donor in catalysis. Residues isoleucine 62–leucine 64 and histidine 81–glutamate 82 contribute to the substrate site.

It belongs to the GTP cyclohydrolase I family. QueF type 1 subfamily.

The protein localises to the cytoplasm. The catalysed reaction is 7-aminomethyl-7-carbaguanine + 2 NADP(+) = 7-cyano-7-deazaguanine + 2 NADPH + 3 H(+). The protein operates within tRNA modification; tRNA-queuosine biosynthesis. Its function is as follows. Catalyzes the NADPH-dependent reduction of 7-cyano-7-deazaguanine (preQ0) to 7-aminomethyl-7-deazaguanine (preQ1). The chain is NADPH-dependent 7-cyano-7-deazaguanine reductase from Campylobacter jejuni subsp. doylei (strain ATCC BAA-1458 / RM4099 / 269.97).